The sequence spans 318 residues: HPr kinase/phosphorylase (318 aa).

Active-site residues include histidine 143 and lysine 164. ATP is bound at residue 158 to 165 (GKSGVGKS). Position 165 (serine 165) interacts with Mg(2+). Residue aspartate 182 is the Proton acceptor; for phosphorylation activity. Proton donor; for dephosphorylation activity of the active site. The segment at 206–215 (MEIRGLGILN) is important for the catalytic mechanism of both phosphorylation and dephosphorylation. Glutamate 207 is a binding site for Mg(2+). Arginine 248 is an active-site residue. An important for the catalytic mechanism of dephosphorylation region spans residues 269–274 (PVKPGR).

Belongs to the HPrK/P family. In terms of assembly, homohexamer. Mg(2+) serves as cofactor.

The catalysed reaction is [HPr protein]-L-serine + ATP = [HPr protein]-O-phospho-L-serine + ADP + H(+). The enzyme catalyses [HPr protein]-O-phospho-L-serine + phosphate + H(+) = [HPr protein]-L-serine + diphosphate. Its function is as follows. Catalyzes the ATP- as well as the pyrophosphate-dependent phosphorylation of a specific serine residue in HPr, a phosphocarrier protein of the phosphoenolpyruvate-dependent sugar phosphotransferase system (PTS). HprK/P also catalyzes the pyrophosphate-producing, inorganic phosphate-dependent dephosphorylation (phosphorolysis) of seryl-phosphorylated HPr (P-Ser-HPr). The sequence is that of HPr kinase/phosphorylase from Leptospira borgpetersenii serovar Hardjo-bovis (strain L550).